An 86-amino-acid chain; its full sequence is Putative antitoxin VapB36 (86 aa).

Its function is as follows. Possibly the antitoxin component of a type II toxin-antitoxin (TA) system. Its cognate toxin is VapC36 (Potential). The polypeptide is Putative antitoxin VapB36 (vapB36) (Mycobacterium tuberculosis (strain CDC 1551 / Oshkosh)).